A 580-amino-acid chain; its full sequence is Type 3 secretion system translocon protein SctE (580 aa).

2 consecutive transmembrane segments (helical) span residues isoleucine 313–serine 333 and isoleucine 399–valine 419.

Belongs to the SctE/SipB/YopB family. As to quaternary structure, the core secretion machinery of the T3SS is composed of approximately 20 different proteins, including cytoplasmic components, a base, an export apparatus and a needle. This subunit is involved in the formation of a pore, called the translocon, in host membrane.

Its subcellular location is the secreted. It localises to the host membrane. Its function is as follows. Component of the type III secretion system (T3SS), also called injectisome, which is used to inject bacterial effector proteins into eukaryotic host cells. IpaB/SctE and IpaC/SctB are inserted into the host membrane where they form a pore and allow the translocation of effector proteins into the cytosol of target cells. The polypeptide is Type 3 secretion system translocon protein SctE (Shigella dysenteriae).